A 148-amino-acid chain; its full sequence is Ubiquitin-conjugating enzyme E2-17 kDa (148 aa).

The region spanning 1 to 147 (MASKRILKEL…ARSWTQKYAM (147 aa)) is the UBC core domain. Residue C85 is the Glycyl thioester intermediate of the active site.

The protein belongs to the ubiquitin-conjugating enzyme family.

The enzyme catalyses S-ubiquitinyl-[E1 ubiquitin-activating enzyme]-L-cysteine + [E2 ubiquitin-conjugating enzyme]-L-cysteine = [E1 ubiquitin-activating enzyme]-L-cysteine + S-ubiquitinyl-[E2 ubiquitin-conjugating enzyme]-L-cysteine.. The protein operates within protein modification; protein ubiquitination. Catalyzes the covalent attachment of ubiquitin to other proteins. Mediates the selective degradation of short-lived and abnormal proteins. This is Ubiquitin-conjugating enzyme E2-17 kDa from Solanum lycopersicum (Tomato).